Here is a 290-residue protein sequence, read N- to C-terminus: Glycine--tRNA ligase alpha subunit (290 aa).

This sequence belongs to the class-II aminoacyl-tRNA synthetase family. In terms of assembly, tetramer of two alpha and two beta subunits.

It is found in the cytoplasm. The catalysed reaction is tRNA(Gly) + glycine + ATP = glycyl-tRNA(Gly) + AMP + diphosphate. The polypeptide is Glycine--tRNA ligase alpha subunit (Prochlorococcus marinus (strain NATL1A)).